We begin with the raw amino-acid sequence, 548 residues long: Zinc metalloproteinase dpy-31 (548 aa).

The signal sequence occupies residues methionine 1–glycine 24. The propeptide occupies tyrosine 25 to lysine 150. The Peptidase M12A domain maps to lysine 150–serine 349. The N-linked (GlcNAc...) asparagine glycan is linked to asparagine 190. 5 disulfides stabilise this stretch: cysteine 193–cysteine 348, cysteine 216–cysteine 237, cysteine 352–cysteine 372, cysteine 374–cysteine 383, and cysteine 394–cysteine 422. Zn(2+) is bound at residue histidine 245. Glutamate 246 is an active-site residue. Residues histidine 249 and histidine 255 each coordinate Zn(2+). Residues asparagine 344–glutamate 384 enclose the EGF-like domain. Residues cysteine 394–leucine 510 enclose the CUB domain. The N-linked (GlcNAc...) asparagine glycan is linked to asparagine 461. A TSP type-1 domain is found at asparagine 513–proline 547. Disulfide bonds link cysteine 525–cysteine 546, cysteine 529–cysteine 546, and cysteine 541–cysteine 546.

The cofactor is Zn(2+).

The protein resides in the secreted. Functionally, metalloprotease which cleaves the carboxyl terminus of procollagens to mature collagens. Probably involved in cuticular collagen maturation. This chain is Zinc metalloproteinase dpy-31, found in Haemonchus contortus (Barber pole worm).